The following is a 208-amino-acid chain: LexA repressor (208 aa).

The segment at residues 28 to 48 (RAEIARELGFRSANAAEEHLK) is a DNA-binding region (H-T-H motif). Residues Ser125 and Lys162 each act as for autocatalytic cleavage activity in the active site.

It belongs to the peptidase S24 family. Homodimer.

It catalyses the reaction Hydrolysis of Ala-|-Gly bond in repressor LexA.. Represses a number of genes involved in the response to DNA damage (SOS response), including recA and lexA. In the presence of single-stranded DNA, RecA interacts with LexA causing an autocatalytic cleavage which disrupts the DNA-binding part of LexA, leading to derepression of the SOS regulon and eventually DNA repair. The polypeptide is LexA repressor (Aliivibrio fischeri (strain MJ11) (Vibrio fischeri)).